Reading from the N-terminus, the 515-residue chain is Tetratricopeptide repeat protein 8 (515 aa).

Residues 4–37 form a TPR 1 repeat; that stretch reads EMEPLLRAWSYFRRRKFQLCADLCTQMLEKSPYD. Disordered stretches follow at residues 89 to 109 and 118 to 137; these read RPGTSLKLPGTNQTGGPTQAV and PITGFLRPSTQSGRPGTMEQ. TPR repeat units follow at residues 225 to 258, 259 to 291, 292 to 325, 326 to 359, 360 to 393, 397 to 430, and 432 to 464; these read WWWKVQIGKCYYRLGMYREAEKQFKSALKQQEMV, DTFLYLAKVYIILDQPVTALNLFKQGLDKFPGE, VTLLCGIARIYEEMNNSSSAAEYYKEVLKQDNTH, VEAIACIGSNHFYSDQPEVALRFYRRLLQMGVYN, CQLFNNLGLCCFYAQQYDMTLTSFERALSLAENE, ADVWYNLGHIAVGIGDTNLAHQCFRLALVHNNHH, and EAYNNLAVLEMRKGHVEQARALLQTASSLAPHM.

As to quaternary structure, part of BBSome complex, that contains BBS1, BBS2, BBS4, BBS5, BBS7, BBS8/TTC8, BBS9 and BBIP10. Interacts with PCM1. Interacts with CCDC28B. Interacts with PKD1. In terms of tissue distribution, isoform 1 is retina-specific whereas isoform 2 is ubiquitously expressed.

It is found in the cytoplasm. It localises to the cytoskeleton. Its subcellular location is the microtubule organizing center. The protein localises to the centrosome. The protein resides in the centriole. It is found in the cell projection. It localises to the cilium membrane. Its subcellular location is the centriolar satellite. The protein localises to the cilium. Its function is as follows. The BBSome complex is thought to function as a coat complex required for sorting of specific membrane proteins to the primary cilia. The BBSome complex is required for ciliogenesis but is dispensable for centriolar satellite function. This ciliogenic function is mediated in part by the Rab8 GDP/GTP exchange factor, which localizes to the basal body and contacts the BBSome. Rab8(GTP) enters the primary cilium and promotes extension of the ciliary membrane. Firstly the BBSome associates with the ciliary membrane and binds to RAB3IP/Rabin8, the guanosyl exchange factor (GEF) for Rab8 and then the Rab8-GTP localizes to the cilium and promotes docking and fusion of carrier vesicles to the base of the ciliary membrane. The BBSome complex, together with the LTZL1, controls SMO ciliary trafficking and contributes to the sonic hedgehog (SHH) pathway regulation. Required for proper BBSome complex assembly and its ciliary localization. The protein is Tetratricopeptide repeat protein 8 (Ttc8) of Mus musculus (Mouse).